A 248-amino-acid chain; its full sequence is UPF0736 protein BCE_1296 (248 aa).

The protein belongs to the UPF0736 family.

This chain is UPF0736 protein BCE_1296, found in Bacillus cereus (strain ATCC 10987 / NRS 248).